The chain runs to 220 residues: Deoxyribose-phosphate aldolase (220 aa).

D89 serves as the catalytic Proton donor/acceptor. K151 (schiff-base intermediate with acetaldehyde) is an active-site residue. The active-site Proton donor/acceptor is K180.

Belongs to the DeoC/FbaB aldolase family. DeoC type 1 subfamily.

Its subcellular location is the cytoplasm. It catalyses the reaction 2-deoxy-D-ribose 5-phosphate = D-glyceraldehyde 3-phosphate + acetaldehyde. It functions in the pathway carbohydrate degradation; 2-deoxy-D-ribose 1-phosphate degradation; D-glyceraldehyde 3-phosphate and acetaldehyde from 2-deoxy-alpha-D-ribose 1-phosphate: step 2/2. Functionally, catalyzes a reversible aldol reaction between acetaldehyde and D-glyceraldehyde 3-phosphate to generate 2-deoxy-D-ribose 5-phosphate. The sequence is that of Deoxyribose-phosphate aldolase from Streptococcus pneumoniae (strain 70585).